Reading from the N-terminus, the 178-residue chain is MSLVPEASTSRAPKYCYFFKTLLVEELELETSYHNLHYGQCALIGRLAFKANQYRLENVRVKCLPKKYSLGEGTVSLLILGLTHDKVVENRVSTGRYCIVRGEVVLHNVQHPKGAKLTAGGVYDKINSLSNDPLAQKQYLSALLATYRPAIDLWYIQVIDRAEDLLTRRLEMRSLIEK.

As to quaternary structure, probably homodimerizes. Component of the MTV complex, composed of moi/modigliani, tea and ver/verrocchio. Interacts with ver/verrochio and tea (via C-terminus); the interactions are direct and require fully intact moi/modigliani and ver/verrocchio. The MTV complex is recruited to telomeres by the HipHop-HOAP complex, consisting of HipHop, cav/HOAP and Su(var)205/HP1 to form the terminin telomere-capping complex. Interacts with cav/HOAP and Su(var)205/HP1; the interactions are direct. Probably interacts with peo (via N-terminus and UBC domain).

It localises to the nucleus. The protein resides in the chromosome. It is found in the telomere. Its function is as follows. Part of the MTV complex that associates with the HipHop-HOAP complex to form the terminin telomere-capping complex involved in telomere maintenance and prevention of telomere fusion. Potentially functions downstream of mei-41/ATR. As part of the MTV complex binds single stranded DNA in a sequence-independent manner, protecting it from degradation. This chain is Protein modigliani, found in Drosophila melanogaster (Fruit fly).